Consider the following 404-residue polypeptide: Protrudin (404 aa).

Residues 1–20 are disordered; it reads MQTSEREGCGPEVSPSTVPE. At 1–66 the chain is on the cytoplasmic side; that stretch reads MQTSEREGCG…AGDGVRYLLR (66 aa). Residues 1–92 form a sufficient for homooligomerization region; it reads MQTSEREGCG…LFLTLNEGAW (92 aa). Positions 1-205 are sufficient for localization to endoplasmic reticulum tubular network and for interactions with REEP1, REEP5, ATL1, ATL2, ATL3 and SPAST; the sequence is MQTSEREGCG…LYLLPLCWVL (205 aa). The interval 51–64 is necessary for interaction with RAB11A and function in neurite outgrowth; the sequence is LEPLKDAGDGVRYL. Residues 67–87 form a helical membrane-spanning segment; it reads WQTPLCSLLTCLGLNVLFLTL. Asn88 is a topological domain (lumenal). A helical transmembrane segment spans residues 89–109; the sequence is EGAWYSVGALMISVPALLGYL. The Cytoplasmic portion of the chain corresponds to 110-187; sequence QEGCQARLSE…NPAVSSQFYG (78 aa). An intramembrane region (helical) is located at residues 188 to 208; that stretch reads ALLGTVCMLYLLPLCWVLALL. At 209-404 the chain is on the cytoplasmic side; sequence NSTLFLGNVE…CASCNQTLSK (196 aa). Residues 234 to 286 form a disordered region; the sequence is MNPKQEESAFESPPPSDAGGKGALVDCTPAPTPTEDLTPGSVEEAEEAEPDEE. Residues 271-354 form a necessary for interaction with KIF5A region; it reads TPGSVEEAEE…GCSATFSVLK (84 aa). A compositionally biased stretch (acidic residues) spans 276 to 286; the sequence is EEAEEAEPDEE. Residues 286–292 are necessary for interaction with VAPA; the sequence is EFKDAIE. The FYVE-type zinc finger occupies 337–403; it reads TNNYGSCTGC…VCASCNQTLS (67 aa). Cys343, Cys346, Cys359, Cys362, Cys367, Cys370, Cys395, and Cys398 together coordinate Zn(2+).

Can form homooligomers (monomers, dimers and tetramers). Interacts with RAB11A (GDP-bound form); regulates RAB11A. Interacts with FKBP8; may negatively regulate ZFYVE27 phosphorylation. Interacts with VAPA (via MSP domain); may regulate ZFYVE27 retention in the endoplasmic reticulum and its function in cell projections formation. Interacts with VAPB (via MSP domain). Interacts with RAB11B (GDP-bound form), REEP1, REEP5, ATL1, ATL2, ATL3, SPAST, SURF4, KIF5A, KIF5B, KIF5C and RTN3. Post-translationally, phosphorylated. Phosphorylation is induced by NGF through the MAPK/ERK pathway and modulates interaction with RAB11A.

It is found in the recycling endosome membrane. It localises to the endoplasmic reticulum membrane. The protein resides in the cell projection. Its subcellular location is the growth cone membrane. Its function is as follows. Key regulator of RAB11-dependent vesicular trafficking during neurite extension through polarized membrane transport. Promotes axonal elongation and contributes to the establishment of neuronal cell polarity. Involved in nerve growth factor-induced neurite formation in VAPA-dependent manner. Contributes to both the formation and stabilization of the tubular ER network. Involved in ER morphogenesis by regulating the sheet-to-tubule balance and possibly the density of tubule interconnections. Acts as an adapter protein that facilitates the interaction of KIF5A with VAPA, VAPB, SURF4, RAB11A, RAB11B and RTN3 and the ZFYVE27-KIF5A complex contributes to the transport of these proteins in neurons. Can induce formation of neurite-like membrane protrusions in non-neuronal cells in a KIF5A/B-dependent manner. The chain is Protrudin (ZFYVE27) from Bos taurus (Bovine).